The following is a 213-amino-acid chain: Small ribosomal subunit protein uS5 (213 aa).

Positions 54–117 constitute an S5 DRBM domain; it reads LKSETVDVRL…RNAKLNIIPV (64 aa).

The protein belongs to the universal ribosomal protein uS5 family. In terms of assembly, part of the 30S ribosomal subunit. Contacts protein S4.

Functionally, with S4 and S12 plays an important role in translational accuracy. The polypeptide is Small ribosomal subunit protein uS5 (Hyperthermus butylicus (strain DSM 5456 / JCM 9403 / PLM1-5)).